We begin with the raw amino-acid sequence, 266 residues long: MLDAATPTHQRVRGRAMARFTGRRLRDLHQSGSAKVLIPRVFGRAPEVVFLNTAGGITGGDRLDYALHVDDGTCVGTTQTAERAYRSHGPMGRVSTRLTIGQGATLHWVPQEMILFDGVALERDLSVEMAGDAELVMLETLVLGRAAMGEVLRDLHLRDRRRVTRGGKLAMVEAIGLGPDDFASSSPAGLNGAVATASLTLMAQDAEDRLNALRAVLPTDVRSAASAWDGRLTARFLAPQAYPLRRAVARAVEQVTCGALPRVWQI.

This sequence belongs to the UreD family. As to quaternary structure, ureD, UreF and UreG form a complex that acts as a GTP-hydrolysis-dependent molecular chaperone, activating the urease apoprotein by helping to assemble the nickel containing metallocenter of UreC. The UreE protein probably delivers the nickel.

The protein localises to the cytoplasm. Functionally, required for maturation of urease via the functional incorporation of the urease nickel metallocenter. In Jannaschia sp. (strain CCS1), this protein is Urease accessory protein UreD.